Consider the following 193-residue polypeptide: dTTP/UTP pyrophosphatase (193 aa).

Residue Asp70 is the Proton acceptor of the active site.

It belongs to the Maf family. YhdE subfamily. The cofactor is a divalent metal cation.

It localises to the cytoplasm. It carries out the reaction dTTP + H2O = dTMP + diphosphate + H(+). It catalyses the reaction UTP + H2O = UMP + diphosphate + H(+). Its function is as follows. Nucleoside triphosphate pyrophosphatase that hydrolyzes dTTP and UTP. May have a dual role in cell division arrest and in preventing the incorporation of modified nucleotides into cellular nucleic acids. The chain is dTTP/UTP pyrophosphatase from Ruminiclostridium cellulolyticum (strain ATCC 35319 / DSM 5812 / JCM 6584 / H10) (Clostridium cellulolyticum).